We begin with the raw amino-acid sequence, 805 residues long: Centrosomal protein of 85 kDa-like (805 aa).

2 disordered regions span residues 1 to 27 and 50 to 89; these read MWGR…AGPD and RNNH…LSFK. Residue Ser15 is modified to Phosphoserine. The span at 60–74 shows a compositional bias: polar residues; that stretch reads ASDSGDTGIGTSCSD. Ser207 is subject to Phosphoserine. A coiled-coil region spans residues 439 to 682; that stretch reads SQQGEFEQKL…LENQRQTDET (244 aa).

It belongs to the CEP85 family. In terms of tissue distribution, isoform 1 and isoform 4 are expressed in spleen, lymph, thymus, tonsil and peripheral blood leukocytes, with isoform 1 expressed at higher levels. Isoform 4 is detected in K-562 leukemia cells and in the blood of precursor T lymphoblastic lymphoma (T-ALL) patients.

The protein localises to the cytoplasm. It localises to the cytoskeleton. The protein resides in the microtubule organizing center. It is found in the centrosome. Its function is as follows. Plays an essential role in neuronal cell migration. The polypeptide is Centrosomal protein of 85 kDa-like (Homo sapiens (Human)).